A 252-amino-acid polypeptide reads, in one-letter code: Major prion protein (252 aa).

Positions 1–22 (MANLGCWMLVLFVATWSDLGLC) are cleaved as a signal peptide. The tract at residues 23 to 38 (KKRPKPGGWNTGGSRY) is interaction with ADGRG6. The segment at 23-229 (KKRPKPGGWN…ESQAYYQRGS (207 aa)) is interaction with GRB2, ERI3 and SYN1. The segment at 26–106 (PKPGGWNTGG…QWNKPSKPKT (81 aa)) is disordered. Repeat copies occupy residues 51 to 58 (PQGGGWGQ), 59 to 66 (PHGGGWGQ), 67 to 74 (PHGGGWGQ), 75 to 82 (PHGGSWGQ), and 83 to 90 (PHGGGWGQ). The segment at 51 to 90 (PQGGGWGQPHGGGWGQPHGGGWGQPHGGSWGQPHGGGWGQ) is 5 X 8 AA tandem repeats of P-H-G-G-G-W-G-Q. The span at 52-94 (QGGGWGQPHGGGWGQPHGGGWGQPHGGSWGQPHGGGWGQGGGT) shows a compositional bias: gly residues. The Cu(2+) site is built by H60, G61, G62, H68, G69, G70, H76, G77, G78, H84, G85, and G86. Residues C178 and C213 are joined by a disulfide bond. N-linked (GlcNAc...) asparagine glycosylation is found at N180 and N196. The GPI-anchor amidated serine moiety is linked to residue S229. Residues 230 to 252 (SMVLFSSPPVILLISFLIFLIVG) constitute a propeptide, removed in mature form.

Belongs to the prion family. As to quaternary structure, monomer and homodimer. Has a tendency to aggregate into amyloid fibrils containing a cross-beta spine, formed by a steric zipper of superposed beta-strands. Soluble oligomers may represent an intermediate stage on the path to fibril formation. Copper binding may promote oligomerization. Interacts with GRB2, APP, ERI3/PRNPIP and SYN1. Mislocalized cytosolically exposed PrP interacts with MGRN1; this interaction alters MGRN1 subcellular location and causes lysosomal enlargement. Interacts with APP. Interacts with KIAA1191. Interacts with ADGRG6.

It localises to the cell membrane. Its subcellular location is the golgi apparatus. Functionally, its primary physiological function is unclear. May play a role in neuronal development and synaptic plasticity. May be required for neuronal myelin sheath maintenance. May promote myelin homeostasis through acting as an agonist for ADGRG6 receptor. May play a role in iron uptake and iron homeostasis. Soluble oligomers are toxic to cultured neuroblastoma cells and induce apoptosis (in vitro). Association with GPC1 (via its heparan sulfate chains) targets PRNP to lipid rafts. Also provides Cu(2+) or Zn(2+) for the ascorbate-mediated GPC1 deaminase degradation of its heparan sulfate side chains. This Sapajus apella (Brown-capped capuchin) protein is Major prion protein (PRNP).